Reading from the N-terminus, the 119-residue chain is Large ribosomal subunit protein bL20 (119 aa).

The protein belongs to the bacterial ribosomal protein bL20 family.

In terms of biological role, binds directly to 23S ribosomal RNA and is necessary for the in vitro assembly process of the 50S ribosomal subunit. It is not involved in the protein synthesizing functions of that subunit. This chain is Large ribosomal subunit protein bL20, found in Acidovorax ebreus (strain TPSY) (Diaphorobacter sp. (strain TPSY)).